A 342-amino-acid chain; its full sequence is S-adenosylmethionine:tRNA ribosyltransferase-isomerase (342 aa).

The protein belongs to the QueA family. As to quaternary structure, monomer.

The protein resides in the cytoplasm. The catalysed reaction is 7-aminomethyl-7-carbaguanosine(34) in tRNA + S-adenosyl-L-methionine = epoxyqueuosine(34) in tRNA + adenine + L-methionine + 2 H(+). It functions in the pathway tRNA modification; tRNA-queuosine biosynthesis. Functionally, transfers and isomerizes the ribose moiety from AdoMet to the 7-aminomethyl group of 7-deazaguanine (preQ1-tRNA) to give epoxyqueuosine (oQ-tRNA). This chain is S-adenosylmethionine:tRNA ribosyltransferase-isomerase, found in Campylobacter jejuni subsp. jejuni serotype O:6 (strain 81116 / NCTC 11828).